Consider the following 391-residue polypeptide: MKVKYLMLTLVGAIALNASAQENTVPATGQLPAKNVAFARNKAGSNWFVTLQGGVAAQFLNDNNNKDLMDRLGAIGSLSVGKYHSPFFATRLQINGGQAHTFLGKNGEQEINTNFGAAHFDFMFDVVNYFAPYRENRFFHLIPWVGVGYQHKFIGSEWSKDNVESLTANVGVMMAFRLGKRVDFVIEAQAAHSNLNLSRAYNAKKTPVFEDPAGRYYNGFQGMATAGLNFRLGAVGFNAIEPMDYALINDLNGQINRLRSEVEELSKRPVSCPECPEVTPVTKTENILTEKAVLFRFDSHVVDKDQLINLYDVAQFVKETNEPITVVGYADPTGNTQYNEKLSERRAKAVVDVLTGKYGVPSELISVEWKGDSTQPFSKKAWNRVVIVRSK.

An N-terminal signal peptide occupies residues 1–20; sequence MKVKYLMLTLVGAIALNASA. At Gln21 the chain carries Pyrrolidone carboxylic acid. The 110-residue stretch at 282–391 folds into the OmpA-like domain; it reads TKTENILTEK…WNRVVIVRSK (110 aa).

This sequence belongs to the outer membrane OOP (TC 1.B.6) superfamily. In terms of assembly, disulfide-linked heterodimer with Omp40.

It localises to the cell outer membrane. Its function is as follows. May have porin activity and function in peptidoglycan binding. This chain is Outer membrane protein 41, found in Porphyromonas gingivalis (strain ATCC BAA-308 / W83).